A 675-amino-acid chain; its full sequence is Collagen alpha-3(IX) chain (675 aa).

Residues 1–21 (MTVFPTLGLLFLCQLLATTSA) form the signal peptide. Disordered stretches follow at residues 22 to 517 (QRVG…KEAS) and 542 to 660 (KPLS…ICDT). A triple-helical region 3 (COL3) region spans residues 25 to 515 (GPQGPPGPRG…TGKPGPPGKE (491 aa)). Pro residues-rich tracts occupy residues 27 to 38 (QGPPGPRGPPGP) and 51 to 60 (SGLPGPPGPK). Over residues 62-87 (APGKPGAAGEAGLPGLPGVDGLTGTD) the composition is skewed to low complexity. Residues 105-125 (AGPPGPAGKGLPGPPGPPGPS) show a composition bias toward pro residues. A compositionally biased stretch (gly residues) spans 126–135 (GLPGGNGFRG). 2 stretches are compositionally biased toward pro residues: residues 136–155 (PPGP…PGPP) and 173–184 (LCPPGPPGPPGM). A compositionally biased stretch (low complexity) spans 218-233 (PGSVGLQGPRGLRGLP). A Cell attachment site motif is present at residues 242–244 (RGD). Basic and acidic residues predominate over residues 301-317 (KDGRDGAPGLDGEKGDA). A compositionally biased stretch (low complexity) spans 361 to 374 (EPGIPGDVGIPGDR). An N-linked (GlcNAc...) asparagine glycan is attached at N479. Low complexity predominate over residues 481–508 (TAGAPGIPGHPGPMGHQGEQGVPGITGK). The tract at residues 516-546 (ASEQHIRELCGEMINDQIAQLAANLRKPLSP) is nonhelical region 3 (NC3). The segment at 547–626 (GMTGRPGPAG…QGLPGVPGIS (80 aa)) is triple-helical region 2 (COL2). The segment covering 569–582 (HPGARGPPGYRGPT) has biased composition (low complexity). The Cell attachment site motif lies at 591 to 593 (RGD). Positions 613–624 (DQGPQGLPGVPG) are enriched in low complexity. Residues 627-631 (KNGRD) are nonhelical region 2 (NC2). Positions 632 to 658 (GAQGEPGLPGDPGTPGAVGAQGTPGIC) are triple-helical region 1 (COL1). Positions 659–675 (DTSACMGAVGASTSKKS) are nonhelical region 1 (NC1).

Belongs to the fibril-associated collagens with interrupted helices (FACIT) family. Trimers composed of three different chains: alpha 1(IX), alpha 2(IX), and alpha 3(IX). Post-translationally, prolines at the third position of the tripeptide repeating unit (G-X-Y) are hydroxylated in some or all of the chains.

It is found in the secreted. The protein localises to the extracellular space. Its subcellular location is the extracellular matrix. Functionally, collagen type IX is a minor cartilage non-fibrillar collagen. It is associated with type II collagen fibrils. This chain is Collagen alpha-3(IX) chain (COL9A3), found in Gallus gallus (Chicken).